Reading from the N-terminus, the 251-residue chain is UPF0246 protein TM1040_2658 (251 aa).

The protein belongs to the UPF0246 family.

The protein is UPF0246 protein TM1040_2658 of Ruegeria sp. (strain TM1040) (Silicibacter sp.).